Reading from the N-terminus, the 305-residue chain is Ribosomal RNA small subunit methyltransferase H (305 aa).

Residues 30–32, aspartate 49, phenylalanine 74, aspartate 96, and glutamine 103 each bind S-adenosyl-L-methionine; that span reads GGH.

Belongs to the methyltransferase superfamily. RsmH family.

The protein localises to the cytoplasm. The catalysed reaction is cytidine(1402) in 16S rRNA + S-adenosyl-L-methionine = N(4)-methylcytidine(1402) in 16S rRNA + S-adenosyl-L-homocysteine + H(+). Specifically methylates the N4 position of cytidine in position 1402 (C1402) of 16S rRNA. This Francisella tularensis subsp. novicida (strain U112) protein is Ribosomal RNA small subunit methyltransferase H.